Here is a 73-residue protein sequence, read N- to C-terminus: Cell division protein ZapB (73 aa).

Residues 3 to 66 adopt a coiled-coil conformation; that stretch reads LELLSKLETK…SWNEKVTGLV (64 aa).

This sequence belongs to the ZapB family. As to quaternary structure, homodimer. The ends of the coiled-coil dimer bind to each other, forming polymers. Interacts with FtsZ.

It localises to the cytoplasm. Non-essential, abundant cell division factor that is required for proper Z-ring formation. It is recruited early to the divisome by direct interaction with FtsZ, stimulating Z-ring assembly and thereby promoting cell division earlier in the cell cycle. Its recruitment to the Z-ring requires functional FtsA or ZipA. The polypeptide is Cell division protein ZapB (Shewanella baltica (strain OS223)).